A 264-amino-acid chain; its full sequence is Acyl-[acyl-carrier-protein]--UDP-N-acetylglucosamine O-acyltransferase (264 aa).

The protein belongs to the transferase hexapeptide repeat family. LpxA subfamily. In terms of assembly, homotrimer.

The protein localises to the cytoplasm. It catalyses the reaction a (3R)-hydroxyacyl-[ACP] + UDP-N-acetyl-alpha-D-glucosamine = a UDP-3-O-[(3R)-3-hydroxyacyl]-N-acetyl-alpha-D-glucosamine + holo-[ACP]. Its pathway is glycolipid biosynthesis; lipid IV(A) biosynthesis; lipid IV(A) from (3R)-3-hydroxytetradecanoyl-[acyl-carrier-protein] and UDP-N-acetyl-alpha-D-glucosamine: step 1/6. In terms of biological role, involved in the biosynthesis of lipid A, a phosphorylated glycolipid that anchors the lipopolysaccharide to the outer membrane of the cell. This is Acyl-[acyl-carrier-protein]--UDP-N-acetylglucosamine O-acyltransferase from Chlorobium phaeobacteroides (strain DSM 266 / SMG 266 / 2430).